The chain runs to 213 residues: High frequency lysogenization protein HflD homolog (213 aa).

This sequence belongs to the HflD family.

It localises to the cytoplasm. The protein resides in the cell inner membrane. In Alcanivorax borkumensis (strain ATCC 700651 / DSM 11573 / NCIMB 13689 / SK2), this protein is High frequency lysogenization protein HflD homolog.